Consider the following 496-residue polypeptide: Alanine aminotransferase 1 (496 aa).

Position 2 is an N-acetylalanine (Ala2). Phosphothreonine is present on Thr22. Position 314 is an N6-(pyridoxal phosphate)lysine (Lys314).

The protein belongs to the class-I pyridoxal-phosphate-dependent aminotransferase family. Alanine aminotransferase subfamily. Homodimer. It depends on pyridoxal 5'-phosphate as a cofactor. Liver, heart, skeletal muscle, etc.

The protein resides in the cytoplasm. It carries out the reaction L-alanine + 2-oxoglutarate = pyruvate + L-glutamate. The protein operates within amino-acid degradation; L-alanine degradation via transaminase pathway; pyruvate from L-alanine: step 1/1. In terms of biological role, catalyzes the reversible transamination between alanine and 2-oxoglutarate to form pyruvate and glutamate. Participates in cellular nitrogen metabolism and also in liver gluconeogenesis starting with precursors transported from skeletal muscles. This Rattus norvegicus (Rat) protein is Alanine aminotransferase 1 (Gpt).